Reading from the N-terminus, the 292-residue chain is tRNA dimethylallyltransferase (292 aa).

Alanine 5–threonine 12 provides a ligand contact to ATP. Threonine 7–threonine 12 contributes to the substrate binding site. Positions aspartate 29 to glutamine 32 are interaction with substrate tRNA.

It belongs to the IPP transferase family. As to quaternary structure, monomer. Requires Mg(2+) as cofactor.

It carries out the reaction adenosine(37) in tRNA + dimethylallyl diphosphate = N(6)-dimethylallyladenosine(37) in tRNA + diphosphate. In terms of biological role, catalyzes the transfer of a dimethylallyl group onto the adenine at position 37 in tRNAs that read codons beginning with uridine, leading to the formation of N6-(dimethylallyl)adenosine (i(6)A). The sequence is that of tRNA dimethylallyltransferase from Leptospira borgpetersenii serovar Hardjo-bovis (strain JB197).